The following is a 218-amino-acid chain: Histidine biosynthesis bifunctional protein HisIE (218 aa).

A phosphoribosyl-AMP cyclohydrolase region spans residues 1–131; it reads MAPHQFKSKG…GDYDLPPADT (131 aa). Residues 132-218 form a phosphoribosyl-ATP pyrophosphohydrolase region; the sequence is LSQVFRVVEE…VYRALQQRRR (87 aa).

This sequence in the N-terminal section; belongs to the PRA-CH family. It in the C-terminal section; belongs to the PRA-PH family.

Its subcellular location is the cytoplasm. The catalysed reaction is 1-(5-phospho-beta-D-ribosyl)-ATP + H2O = 1-(5-phospho-beta-D-ribosyl)-5'-AMP + diphosphate + H(+). It carries out the reaction 1-(5-phospho-beta-D-ribosyl)-5'-AMP + H2O = 1-(5-phospho-beta-D-ribosyl)-5-[(5-phospho-beta-D-ribosylamino)methylideneamino]imidazole-4-carboxamide. Its pathway is amino-acid biosynthesis; L-histidine biosynthesis; L-histidine from 5-phospho-alpha-D-ribose 1-diphosphate: step 2/9. The protein operates within amino-acid biosynthesis; L-histidine biosynthesis; L-histidine from 5-phospho-alpha-D-ribose 1-diphosphate: step 3/9. In Gloeobacter violaceus (strain ATCC 29082 / PCC 7421), this protein is Histidine biosynthesis bifunctional protein HisIE.